The chain runs to 156 residues: Cellulose synthase operon protein D (156 aa).

Its pathway is glycan metabolism; bacterial cellulose biosynthesis. In terms of biological role, may have a major role in the perfection of crystallization, involved either in the pore structure itself or in the organization of the pores within the linear array of terminal synthesizing complexes (TCs). This chain is Cellulose synthase operon protein D (bcsDI), found in Komagataeibacter xylinus (Gluconacetobacter xylinus).